The sequence spans 152 residues: Proteolipid protein 2 (152 aa).

One can recognise an MARVEL domain in the interval 19 to 137 (FSRTRKGFLL…DAYITFPLRQ (119 aa)). 3 consecutive transmembrane segments (helical) span residues 25 to 45 (GFLL…FSTS), 48 to 68 (GYSF…VVYM), and 85 to 105 (FFRT…VLVE). A glycan (N-linked (GlcNAc...) asparagine) is linked at N108. Residues 112-132 (IAAGALGLCAAGLFGYDAYIT) form a helical membrane-spanning segment.

The protein resides in the membrane. In terms of biological role, may play a role in cell differentiation in the intestinal epithelium. In Bos taurus (Bovine), this protein is Proteolipid protein 2 (PLP2).